Consider the following 108-residue polypeptide: Pyrimidine/purine nucleoside phosphorylase (108 aa).

Belongs to the nucleoside phosphorylase PpnP family.

The enzyme catalyses a purine D-ribonucleoside + phosphate = a purine nucleobase + alpha-D-ribose 1-phosphate. It catalyses the reaction adenosine + phosphate = alpha-D-ribose 1-phosphate + adenine. The catalysed reaction is cytidine + phosphate = cytosine + alpha-D-ribose 1-phosphate. It carries out the reaction guanosine + phosphate = alpha-D-ribose 1-phosphate + guanine. The enzyme catalyses inosine + phosphate = alpha-D-ribose 1-phosphate + hypoxanthine. It catalyses the reaction thymidine + phosphate = 2-deoxy-alpha-D-ribose 1-phosphate + thymine. The catalysed reaction is uridine + phosphate = alpha-D-ribose 1-phosphate + uracil. It carries out the reaction xanthosine + phosphate = alpha-D-ribose 1-phosphate + xanthine. In terms of biological role, catalyzes the phosphorolysis of diverse nucleosides, yielding D-ribose 1-phosphate and the respective free bases. Can use uridine, adenosine, guanosine, cytidine, thymidine, inosine and xanthosine as substrates. Also catalyzes the reverse reactions. The chain is Pyrimidine/purine nucleoside phosphorylase from Polaromonas sp. (strain JS666 / ATCC BAA-500).